Consider the following 97-residue polypeptide: HssA/B-like protein 38 (97 aa).

The interval M1–S29 is disordered.

The protein belongs to the hssA/B family.

The polypeptide is HssA/B-like protein 38 (hssl38) (Dictyostelium discoideum (Social amoeba)).